The following is a 492-amino-acid chain: GMP reductase (492 aa).

NADP(+) is bound by residues 30–31 (SR) and R78. CBS domains are found at residues 99–162 (LIED…LVET) and 164–223 (MTPV…RNAT). Residues 260 to 262 (DIA) and 313 to 314 (VG) contribute to the NADP(+) site. K(+) is bound by residues G314, G316, and C319. The active-site Thioimidate intermediate is C319. T321 acts as the Proton donor/acceptor in catalysis. R322 is a binding site for K(+). GMP is bound by residues 352–354 (DGG), 375–376 (GN), and 401–403 (GMA). NADP(+)-binding positions include M402 and 454-457 (SGIS). Positions 490–492 (SKL) match the Microbody targeting signal motif.

The protein belongs to the IMPDH/GMPR family. GuaC type 1 subfamily. In terms of assembly, homotetramer.

It localises to the glycosome. The enzyme catalyses IMP + NH4(+) + NADP(+) = GMP + NADPH + 2 H(+). Activated by GTP and inhibited by XMP and the IMP analogs allopurinol nucleotide and thiopurinol nucleotide. In terms of biological role, catalyzes the irreversible NADPH-dependent deamination of GMP to IMP. It functions in the conversion of nucleobase, nucleoside and nucleotide derivatives of G to A nucleotides, and in maintaining the intracellular balance of A and G nucleotides. The sequence is that of GMP reductase from Leishmania donovani.